We begin with the raw amino-acid sequence, 314 residues long: MPWTRRHLLTLEELSREEIDQIHATAAAFKRTLSRRVKKVPALRGKTIVNLFLEPSTRTRMAFDMAAKRLSADVISFDAASSSTTKGETLHDTAKNIQALGADMIVIRHAAAGSPLYLSRILDIPVINAGDGAHEHPTQGLLDTFTMKEHLGSLKGRKIVILGDILFSRVARSNIHALTKLGANVTLVGPATLVPHWFTDLGVEVSHDLRTALADAEVVMLLRIQHERQSSGHFPSLGEYTSMFGLNKTRASWLNPKAIIMHPGPINRGVEIDSDLADGDHSVILEQVNNGIAVRMAALYLCAGGQPENVAPIE.

Carbamoyl phosphate-binding residues include arginine 58 and threonine 59. Lysine 86 is an L-aspartate binding site. The carbamoyl phosphate site is built by arginine 108, histidine 136, and glutamine 139. Positions 169 and 223 each coordinate L-aspartate. Positions 264 and 265 each coordinate carbamoyl phosphate.

The protein belongs to the aspartate/ornithine carbamoyltransferase superfamily. ATCase family. In terms of assembly, heterododecamer (2C3:3R2) of six catalytic PyrB chains organized as two trimers (C3), and six regulatory PyrI chains organized as three dimers (R2).

The enzyme catalyses carbamoyl phosphate + L-aspartate = N-carbamoyl-L-aspartate + phosphate + H(+). The protein operates within pyrimidine metabolism; UMP biosynthesis via de novo pathway; (S)-dihydroorotate from bicarbonate: step 2/3. Catalyzes the condensation of carbamoyl phosphate and aspartate to form carbamoyl aspartate and inorganic phosphate, the committed step in the de novo pyrimidine nucleotide biosynthesis pathway. In Opitutus terrae (strain DSM 11246 / JCM 15787 / PB90-1), this protein is Aspartate carbamoyltransferase catalytic subunit.